The chain runs to 120 residues: UPF0102 protein Caur_2698 (120 aa).

The protein belongs to the UPF0102 family.

This chain is UPF0102 protein Caur_2698, found in Chloroflexus aurantiacus (strain ATCC 29366 / DSM 635 / J-10-fl).